The following is a 491-amino-acid chain: MLSFPKGFKFGWSQSGFQSEMGTPGSEDPNSDWHVWVHDRENIVSQVVSGDLPENGPGYWGNYKRFHDEAEKIGLNAVRINVEWSRIFPRPLPKPEMQTGTDKENSPVISVDLNESKLREMDNYANHEALSHYRQILEDLRNRGFHIVLNMYHWTLPIWLHDPIRVRRGDFTGPTGWLNSRTVYEFARFSAYVAWKLDDLASEYATMNEPNVVWGAGYAFPRAGFPPNYLSFRLSEIAKWNIIQAHARAYDAIKSVSKKSVGIIYANTSYYPLRPQDNEAVEIAERLNRWSFFDSIIKGEITSEGQNVREDLRNRLDWIGVNYYTRTVVTKAESGYLTLPGYGDRCERNSLSLANLPTSDFGWEFFPEGLYDVLLKYWNRYGLPLYVMENGIADDADYQRPYYLVSHIYQVHRALNEGVDVRGYLHWSLADNYEWSSGFSMRFGLLKVDYLTKRLYWRPSALVYREITRSNGIPEELEHLNRVPPIKPLRH.

Glu209 (proton donor) is an active-site residue. The active-site Nucleophile is Glu389.

It belongs to the glycosyl hydrolase 1 family.

The enzyme catalyses Hydrolysis of terminal non-reducing beta-D-galactose residues in beta-D-galactosides.. The polypeptide is Beta-galactosidase (bgaS) (Sulfolobus acidocaldarius (strain ATCC 33909 / DSM 639 / JCM 8929 / NBRC 15157 / NCIMB 11770)).